Here is a 371-residue protein sequence, read N- to C-terminus: GDP-perosamine synthase (371 aa).

Lys-186 carries the N6-(pyridoxal phosphate)lysine modification.

Belongs to the DegT/DnrJ/EryC1 family. Homodimer. The cofactor is pyridoxal 5'-phosphate.

The enzyme catalyses GDP-alpha-D-perosamine + 2-oxoglutarate = GDP-4-dehydro-alpha-D-rhamnose + L-glutamate. The protein operates within bacterial outer membrane biogenesis; LPS O-antigen biosynthesis. Functionally, catalyzes the synthesis of GDP-perosamine from GDP-4-keto-6-deoxy-D-mannose and L-glutamate. Can use only L-glutamate as amino donor. In vitro, can also use GDP-4-keto-3,6-dideoxymannose to produce GDP-3-deoxyperosamine. Involved in the formation of S-LPS, which is required for attachment of the protein S-layer to the outer membrane surface. The sequence is that of GDP-perosamine synthase from Caulobacter vibrioides (strain ATCC 19089 / CIP 103742 / CB 15) (Caulobacter crescentus).